Here is a 207-residue protein sequence, read N- to C-terminus: MASRRRKLLKIIILGDSGVGKTSLMNQFVNKKFSNQYKATIGADFLTKELQFEDRLFTLQIWDTAGQERFQSLGVAFYRGADCCVLTYDVNVMKSFESLNRWREEFLIQASPADPDNFPFVLLGNKIDVDGGSGRVVSEKKAKAWCMSKGNIPYFETSAKDGTNVEEAFQCIAKNAIQNEPEEETYLPDTIDMAGSTRPQSSSACEC.

GTP contacts are provided by residues 15–22 (GDSGVGKT), 63–67 (DTAGQ), and 125–128 (NKID). Residues cysteine 205 and cysteine 207 are each lipidated (S-geranylgeranyl cysteine). At cysteine 207 the chain carries Cysteine methyl ester.

This sequence belongs to the small GTPase superfamily. Rab family.

It is found in the cell membrane. Its function is as follows. Protein transport. Probably involved in vesicular traffic. The protein is Ras-related protein Rab7A of Mesembryanthemum crystallinum (Common ice plant).